We begin with the raw amino-acid sequence, 236 residues long: Orotidine 5'-phosphate decarboxylase (236 aa).

Residues aspartate 13, lysine 35, 62–71 (DLKFYDIPQT), threonine 123, arginine 184, glutamine 193, glycine 213, and arginine 214 each bind substrate. The Proton donor role is filled by lysine 64.

It belongs to the OMP decarboxylase family. Type 1 subfamily. In terms of assembly, homodimer.

It catalyses the reaction orotidine 5'-phosphate + H(+) = UMP + CO2. Its pathway is pyrimidine metabolism; UMP biosynthesis via de novo pathway; UMP from orotate: step 2/2. Functionally, catalyzes the decarboxylation of orotidine 5'-monophosphate (OMP) to uridine 5'-monophosphate (UMP). The chain is Orotidine 5'-phosphate decarboxylase from Coxiella burnetii (strain CbuK_Q154) (Coxiella burnetii (strain Q154)).